A 164-amino-acid chain; its full sequence is Large ribosomal subunit protein uL10 (164 aa).

Belongs to the universal ribosomal protein uL10 family. In terms of assembly, part of the ribosomal stalk of the 50S ribosomal subunit. The N-terminus interacts with L11 and the large rRNA to form the base of the stalk. The C-terminus forms an elongated spine to which L12 dimers bind in a sequential fashion forming a multimeric L10(L12)X complex.

In terms of biological role, forms part of the ribosomal stalk, playing a central role in the interaction of the ribosome with GTP-bound translation factors. The protein is Large ribosomal subunit protein uL10 (rplJ) of Helicobacter pylori (strain ATCC 700392 / 26695) (Campylobacter pylori).